A 94-amino-acid chain; its full sequence is Cell division topological specificity factor (94 aa).

Belongs to the MinE family.

Prevents the cell division inhibition by proteins MinC and MinD at internal division sites while permitting inhibition at polar sites. This ensures cell division at the proper site by restricting the formation of a division septum at the midpoint of the long axis of the cell. The chain is Cell division topological specificity factor from Alkaliphilus metalliredigens (strain QYMF).